The primary structure comprises 113 residues: Protein USP1 (113 aa).

An N-terminal signal peptide occupies residues 1–18 (MKITMLFAALSAASGAFA). Repeat copies occupy residues 32-37 (IGAGVG), 40-45 (IGAGVG), 46-49 (PYGY), 50-53 (PYGA), 59-65 (LQLLPLR), and 69-75 (LQWIPLR). Residues 32–45 (IGAGVGIGIGAGVG) are 2 X 6 AA repeats. Residues 46–53 (PYGYPYGA) form a 2 X 4 AA approximate tandem repeats region. The tract at residues 59–75 (LQLLPLRWLSLQWIPLR) is 2 X 7 AA approximate repeats.

The protein resides in the secreted. The protein is Protein USP1 (USP1) of Puccinia graminis (Black stem rust fungus).